The chain runs to 363 residues: Putative replication factor C small subunit L510 (363 aa).

Residue 47 to 54 (GPPGTGKT) coordinates ATP.

The protein belongs to the activator 1 small subunits family. RfcS subfamily.

Its function is as follows. Part of the RFC clamp loader complex which loads the PCNA sliding clamp onto DNA. The chain is Putative replication factor C small subunit L510 from Acanthamoeba polyphaga mimivirus (APMV).